Consider the following 561-residue polypeptide: Putative transport protein YbjL (561 aa).

Transmembrane regions (helical) follow at residues 8-28 (LLNGNYILLLFVVLALGLCLG), 32-52 (LGSVQLGNSIGVLVVSLLLGQ), 66-86 (FMLFIFCVGVEAGPNFFSIFF), 94-114 (MLALVMVGSALLIALGLGKLF), and 158-178 (NLSLGYALTYLIGLVSLIVGA). RCK C-terminal domains lie at 200–288 (RGLD…SFRN) and 292–373 (VFDR…RIGF). 5 consecutive transmembrane segments (helical) span residues 383–403 (LLAFCAFFIIGLMIGMITFQF), 406–426 (FSFGIGNAAGLLFAGIMLGFL), 447–467 (FGLMVFMAGVGLSAGSGINNG), 475–495 (MLIAGLVVSLVPVVICFLFGA), and 540–560 (AIANVLLTLAGTLIVIIWPGL).

It belongs to the AAE transporter (TC 2.A.81) family. YbjL subfamily.

It is found in the cell membrane. This is Putative transport protein YbjL from Salmonella paratyphi C (strain RKS4594).